A 112-amino-acid polypeptide reads, in one-letter code: Cell cycle protein GpsB (112 aa).

Residues 38-72 are a coiled coil; the sequence is IKDYEAFHKEFEQLKQQNARLKRELEEQKLVATQV.

This sequence belongs to the GpsB family. Forms polymers through the coiled coil domains. Interacts with PBP1, MreC and EzrA.

The protein localises to the cytoplasm. Divisome component that associates with the complex late in its assembly, after the Z-ring is formed, and is dependent on DivIC and PBP2B for its recruitment to the divisome. Together with EzrA, is a key component of the system that regulates PBP1 localization during cell cycle progression. Its main role could be the removal of PBP1 from the cell pole after pole maturation is completed. Also contributes to the recruitment of PBP1 to the division complex. Not essential for septum formation. The chain is Cell cycle protein GpsB from Bacillus cereus (strain ZK / E33L).